The sequence spans 269 residues: MIVVKVGGAEGINYEAVAKDAASLWKEGVKLLLVHGGSAETNKVAEALGHPPRFLTHPGGQVSRLTDRKTLEIFEMVYCGLVNKRLVELLQKEGANAIGLSGLDGRLFVGRRKTAVKYVENGKVKVHRGDYTGTVEEVNKALLDLLLQAGYLPVLTPPALSYENEAINTDGDQIAALLATLYGAEALVYLSNVPGLLARYPDEASLVREIPVERIEDPEYLALAQGRMKRKVMGAVEAVRGGVKRVVFADARVENPIRRALSGEGTVVR.

Position 5–8 (5–8) interacts with ATP; the sequence is KVGG. R64 contacts substrate. Y78 lines the ATP pocket. Substrate is bound at residue N168.

Belongs to the acetylglutamate kinase family. LysZ subfamily.

It localises to the cytoplasm. It catalyses the reaction [amino-group carrier protein]-C-terminal-N-(1,4-dicarboxybutan-1-yl)-L-glutamine + ATP = [amino-group carrier protein]-C-terminal-N-(1-carboxy-5-phosphooxy-5-oxopentan-1-yl)-L-glutamine + ADP. The protein operates within amino-acid biosynthesis; L-lysine biosynthesis via AAA pathway; L-lysine from L-alpha-aminoadipate (Thermus route): step 2/5. Its function is as follows. Catalyzes the phosphorylation of LysW-gamma-alpha-aminoadipate. Does not phosphorylate N-acetyl-glutamate. The chain is [LysW]-aminoadipate kinase from Thermus thermophilus (strain ATCC BAA-163 / DSM 7039 / HB27).